The sequence spans 534 residues: CTP synthase (534 aa).

The tract at residues M1–L267 is amidoligase domain. S13 lines the CTP pocket. Residue S13 coordinates UTP. S14–I19 lines the ATP pocket. Y54 serves as a coordination point for L-glutamine. Residue D71 participates in ATP binding. Residues D71 and E141 each contribute to the Mg(2+) site. Residues D148–E150, K188–Q193, and K224 contribute to the CTP site. UTP contacts are provided by residues K188–Q193 and K224. The 243-residue stretch at T292–E534 folds into the Glutamine amidotransferase type-1 domain. G354 is an L-glutamine binding site. C381 functions as the Nucleophile; for glutamine hydrolysis in the catalytic mechanism. Residues L382 to Q385, E405, and R462 contribute to the L-glutamine site. Catalysis depends on residues H507 and E509.

The protein belongs to the CTP synthase family. Homotetramer.

It catalyses the reaction UTP + L-glutamine + ATP + H2O = CTP + L-glutamate + ADP + phosphate + 2 H(+). The catalysed reaction is L-glutamine + H2O = L-glutamate + NH4(+). The enzyme catalyses UTP + NH4(+) + ATP = CTP + ADP + phosphate + 2 H(+). It participates in pyrimidine metabolism; CTP biosynthesis via de novo pathway; CTP from UDP: step 2/2. Its activity is regulated as follows. Allosterically activated by GTP, when glutamine is the substrate; GTP has no effect on the reaction when ammonia is the substrate. The allosteric effector GTP functions by stabilizing the protein conformation that binds the tetrahedral intermediate(s) formed during glutamine hydrolysis. Inhibited by the product CTP, via allosteric rather than competitive inhibition. Catalyzes the ATP-dependent amination of UTP to CTP with either L-glutamine or ammonia as the source of nitrogen. Regulates intracellular CTP levels through interactions with the four ribonucleotide triphosphates. The chain is CTP synthase from Herpetosiphon aurantiacus (strain ATCC 23779 / DSM 785 / 114-95).